A 77-amino-acid polypeptide reads, in one-letter code: Acyl carrier protein (77 aa).

Positions 1-76 (MATFDDVKAV…DVVNYIDNLK (76 aa)) constitute a Carrier domain. Serine 36 is modified (O-(pantetheine 4'-phosphoryl)serine).

It belongs to the acyl carrier protein (ACP) family. In terms of processing, 4'-phosphopantetheine is transferred from CoA to a specific serine of apo-ACP by AcpS. This modification is essential for activity because fatty acids are bound in thioester linkage to the sulfhydryl of the prosthetic group.

It is found in the cytoplasm. It participates in lipid metabolism; fatty acid biosynthesis. Carrier of the growing fatty acid chain in fatty acid biosynthesis. This is Acyl carrier protein from Campylobacter jejuni (strain RM1221).